The following is a 120-amino-acid chain: MWGYIHLISWVAIVVLTVTALLIYSKSVKSFTMLQMINRVFYILVILSGIMMVKYSIEQSWILAIFKILMGIIVIGVVEMLLSYRKQQKPTGMFLMIFVIVVVITISLGFYLSGGYPLFN.

The next 4 helical transmembrane spans lie at 3–23, 33–53, 62–82, and 92–112; these read GYIHLISWVAIVVLTVTALLI, MLQMINRVFYILVILSGIMMV, ILAIFKILMGIIVIGVVEMLL, and GMFLMIFVIVVVITISLGFYL.

Belongs to the UPF0344 family.

The protein localises to the cell membrane. The chain is UPF0344 protein LMHCC_0278 from Listeria monocytogenes serotype 4a (strain HCC23).